Here is a 272-residue protein sequence, read N- to C-terminus: NH(3)-dependent NAD(+) synthetase (272 aa).

Deamido-NAD(+) is bound at residue Tyr33. ATP contacts are provided by residues 45–52, Arg79, and Gln85; that span reads GISGGQDS. A Mg(2+)-binding site is contributed by Asp51. Arg138 is a binding site for deamido-NAD(+). Thr158 provides a ligand contact to ATP. Glu163 is a Mg(2+) binding site. Lys171 and Asp178 together coordinate deamido-NAD(+). Lys187 and Thr209 together coordinate ATP. Deamido-NAD(+) contacts are provided by residues Glu224 and 258 to 259; that span reads HK.

This sequence belongs to the NAD synthetase family. Homodimer. In terms of processing, phosphorylated during sporulation.

The enzyme catalyses deamido-NAD(+) + NH4(+) + ATP = AMP + diphosphate + NAD(+) + H(+). It participates in cofactor biosynthesis; NAD(+) biosynthesis; NAD(+) from deamido-NAD(+) (ammonia route): step 1/1. Catalyzes the ATP-dependent amidation of deamido-NAD to form NAD. Uses ammonia as a nitrogen source. This is NH(3)-dependent NAD(+) synthetase from Bacillus subtilis (strain 168).